A 335-amino-acid polypeptide reads, in one-letter code: MTLPRSLRWTGDHLDLLDQRCLPHTVVYRQLTHWREVSEAIRSMAVRGAPAIGVAAAWGVVLAAKAGDDLDQAIEGLRASRPTAVNLSWALNRMQTSAKSNGWVDVHQLERLASAIEAEDRALTQALVNHGVGVLPEDCRVLHHCHTGAVATAGVGTALGVIVAGHQRGIVKHAWLDETRPRLQGAALSAWELGCCGVPATVIVDGASGLLMRRGQVDVVLVGCDRVAGNGDVANKIGTYNLALAARAHGVPFYVCAPSSSIDITTVDGDAITIEERPEDEITHFRGELVCASGVRAWNPAFDITPAHLITGLITEFGVIRSPSRESIASLPFAN.

Substrate contacts are provided by residues 47-49 (RGA), arginine 81, and glutamine 184. Aspartate 225 (proton donor) is an active-site residue. Residue 235–236 (NK) participates in substrate binding.

This sequence belongs to the eIF-2B alpha/beta/delta subunits family. MtnA subfamily.

It catalyses the reaction 5-(methylsulfanyl)-alpha-D-ribose 1-phosphate = 5-(methylsulfanyl)-D-ribulose 1-phosphate. Its pathway is amino-acid biosynthesis; L-methionine biosynthesis via salvage pathway; L-methionine from S-methyl-5-thio-alpha-D-ribose 1-phosphate: step 1/6. Its function is as follows. Catalyzes the interconversion of methylthioribose-1-phosphate (MTR-1-P) into methylthioribulose-1-phosphate (MTRu-1-P). This is Methylthioribose-1-phosphate isomerase from Synechococcus sp. (strain CC9902).